We begin with the raw amino-acid sequence, 120 residues long: Large ribosomal subunit protein uL18 (120 aa).

Belongs to the universal ribosomal protein uL18 family. Part of the 50S ribosomal subunit; part of the 5S rRNA/L5/L18/L25 subcomplex. Contacts the 5S and 23S rRNAs.

Its function is as follows. This is one of the proteins that bind and probably mediate the attachment of the 5S RNA into the large ribosomal subunit, where it forms part of the central protuberance. In Chloroherpeton thalassium (strain ATCC 35110 / GB-78), this protein is Large ribosomal subunit protein uL18.